Reading from the N-terminus, the 68-residue chain is MGMRMMSIMFMLVVLATTVVSFTSDRALDAMNAAASKKASRLIALAVRGCCSHPACSGNHQELCDGRR.

The signal sequence occupies residues 1–21 (MGMRMMSIMFMLVVLATTVVS). Residues 22 to 48 (FTSDRALDAMNAAASKKASRLIALAVR) constitute a propeptide that is removed on maturation. Cystine bridges form between Cys50-Cys56 and Cys51-Cys64. The segment at 52–54 (SHP) is ser-Xaa-Pro motif, crucial for potent interaction with nAChR. Aspartic acid 1-amide is present on Asp65.

It belongs to the conotoxin A superfamily. In terms of tissue distribution, expressed by the venom duct.

The protein resides in the secreted. Alpha-conotoxins act on postsynaptic membranes, they bind to the nicotinic acetylcholine receptors (nAChR) and thus inhibit them. This toxin inhibits mouse muscle alpha-1-beta-1-gamma-delta (CHRNA1-CHRNB1-CHRNG-CHRND), and weakly rat neuronal alpha-6/alpha-3-beta-2 (CHRNA6/CHRNA3-CHRNB2). This chain is Alpha-conotoxin Lp1.4, found in Conus leopardus (Leopard cone).